We begin with the raw amino-acid sequence, 45 residues long: Pseudo-hevein (45 aa).

Residues 1–43 enclose the Chitin-binding type-1 domain; it reads EQCGRQAGGKLCPNNLCCSQYGWCGSSDDYCSPSKNCQSNCKG. 4 disulfides stabilise this stretch: C3–C18, C12–C24, C17–C31, and C37–C41.

In terms of biological role, N-acetyl-D-glucosamine / N-acetyl-D-neuraminic acid binding lectin. Can inhibit fungal growth. The sequence is that of Pseudo-hevein from Hevea brasiliensis (Para rubber tree).